A 298-amino-acid polypeptide reads, in one-letter code: Myozenin-1 (298 aa).

The segment at 1-34 is disordered; it reads MPLSGTPAPNKKRKSSKLIMELTGGGQESSGLNL. The residue at position 82 (serine 82) is a Phosphoserine. Positions 105–173 are disordered; the sequence is FSYSKGSSGG…TGTGDQAGGE (69 aa). Low complexity predominate over residues 118–129; sequence GSSSAGQYGSGQ. Residues 136–172 are compositionally biased toward gly residues; that stretch reads SGSGSGGAGGPGSQTGRGGDAGTTGVGETGTGDQAGG.

It belongs to the myozenin family. As to quaternary structure, interacts with ACTN2, ACTN3, FLNA, FLNB, FLNC, LDB3, PPP3CA and TCAP. Interacts via its C-terminal region with MYOT.

The protein localises to the nucleus. The protein resides in the cell projection. Its subcellular location is the pseudopodium. In terms of biological role, myozenins may serve as intracellular binding proteins involved in linking Z-disk proteins such as alpha-actinin, gamma-filamin, TCAP/telethonin, LDB3/ZASP and localizing calcineurin signaling to the sarcomere. Plays an important role in the modulation of calcineurin signaling. May play a role in myofibrillogenesis. The sequence is that of Myozenin-1 (MYOZ1) from Sus scrofa (Pig).